A 177-amino-acid polypeptide reads, in one-letter code: ATP synthase subunit b, chloroplastic (177 aa).

Residues 22–42 (ILETNIINLAAVVGIVVFFVG) traverse the membrane as a helical segment.

This sequence belongs to the ATPase B chain family. In terms of assembly, F-type ATPases have 2 components, F(1) - the catalytic core - and F(0) - the membrane proton channel. F(1) has five subunits: alpha(3), beta(3), gamma(1), delta(1), epsilon(1). F(0) has four main subunits: a(1), b(1), b'(1) and c(10-14). The alpha and beta chains form an alternating ring which encloses part of the gamma chain. F(1) is attached to F(0) by a central stalk formed by the gamma and epsilon chains, while a peripheral stalk is formed by the delta, b and b' chains.

It is found in the plastid. The protein resides in the chloroplast thylakoid membrane. Functionally, f(1)F(0) ATP synthase produces ATP from ADP in the presence of a proton or sodium gradient. F-type ATPases consist of two structural domains, F(1) containing the extramembraneous catalytic core and F(0) containing the membrane proton channel, linked together by a central stalk and a peripheral stalk. During catalysis, ATP synthesis in the catalytic domain of F(1) is coupled via a rotary mechanism of the central stalk subunits to proton translocation. In terms of biological role, component of the F(0) channel, it forms part of the peripheral stalk, linking F(1) to F(0). The polypeptide is ATP synthase subunit b, chloroplastic (Oedogonium cardiacum (Filamentous green alga)).